The primary structure comprises 304 residues: Cell surface-binding protein OPG105 (304 aa).

Residues 1–235 (MPQQLSPINI…NDDTQVYYSG (235 aa)) form the Alpha-carbonic anhydrase domain. Over 1-275 (MPQQLSPINI…YQKYIEGNKT (275 aa)) the chain is Virion surface. Residues 276 to 294 (FAIIAIVFVFILTAILFLM) form a helical membrane-spanning segment. At 295–304 (SRRYSREKQN) the chain is on the intravirion side.

It belongs to the alpha-carbonic anhydrase family. As to quaternary structure, homodimer; disulfide-linked. Apparently non-glycosylated.

It localises to the virion membrane. Binds to chondroitin sulfate on the cell surface to provide virion attachment to target cell. The sequence is that of Cell surface-binding protein OPG105 (OPG105) from Vaccinia virus (strain Copenhagen) (VACV).